The sequence spans 306 residues: MAIPVIDFSKLDGKERAETMARIANGCEEWGFFQLVNHGIPVELLERVKKVSSECYKLREERFEGSKPVQLLDTLVKEGDGQRLDNVDWEDVFVLQDDNEWPSNPPDFEETMKEYREEIRKLAEKMMEVMDENLGFEKGCIKKAFSGDGQHPPFFGTKVSHYPPCPRLDLVKGLRAHTDAGGVILLFQDDQVGGLQMLKDGRWIDVQPLADAIVINTGDQIEVLSNGRYKSAWHRVLATSHGNRRSIASFYNPSLKATIAPAAGAATEEAAPPALYPKFLFGDYMDVYAKQKYEPKEPRFEAVRAI.

The 101-residue stretch at 153–253 folds into the Fe2OG dioxygenase domain; the sequence is PFFGTKVSHY…RRSIASFYNP (101 aa). 3 residues coordinate Fe cation: H177, D179, and H234.

The protein belongs to the iron/ascorbate-dependent oxidoreductase family. Fe cation serves as cofactor.

It carries out the reaction 1-aminocyclopropane-1-carboxylate + L-ascorbate + O2 = ethene + L-dehydroascorbate + hydrogen cyanide + CO2 + 2 H2O. Its pathway is alkene biosynthesis; ethylene biosynthesis via S-adenosyl-L-methionine; ethylene from S-adenosyl-L-methionine: step 2/2. In Musa acuminata (Banana), this protein is 1-aminocyclopropane-1-carboxylate oxidase (MAO1B).